The following is a 1501-amino-acid chain: Inactive protein tyrosine kinase pTKL (1501 aa).

N-linked (GlcNAc...) asparagine glycans are attached at residues asparagine 64, asparagine 128, and asparagine 133. The span at 204 to 221 (KKNKKNKKNKKKKNKKTK) shows a compositional bias: basic residues. Residues 204–223 (KKNKKNKKNKKKKNKKTKNT) form a disordered region. N-linked (GlcNAc...) asparagine glycans are attached at residues asparagine 239, asparagine 242, asparagine 258, and asparagine 327. Positions 257 to 273 (MNISLHEKNDKKNEKKN) are enriched in basic and acidic residues. Residues 257–276 (MNISLHEKNDKKNEKKNEKK) are disordered. The SAM domain occupies 301–366 (WSLREVIQWL…LQLIKNLQVM (66 aa)). A disordered region spans residues 392–425 (NKNIKKGKNIKKEKKKKKEKNIKKEKKKKKKETK). Positions 394–424 (NIKKGKNIKKEKKKKKEKNIKKEKKKKKKET) are enriched in basic residues. The stretch at 399 to 433 (KNIKKEKKKKKEKNIKKEKKKKKKETKKFNNMDKK) forms a coiled coil. 3 N-linked (GlcNAc...) asparagine glycosylation sites follow: asparagine 448, asparagine 463, and asparagine 471. The short motif at 483–486 (KVSF) is the RVxF motif 1 element. Asparagine 506 carries N-linked (GlcNAc...) asparagine glycosylation. The segment covering 543-597 (QLSSPLSSPLSSPSPSSSPSSSPSSSPSSSPSSSPSPSSSPSPSSSPSSSPSSSP) has biased composition (low complexity). The disordered stretch occupies residues 543 to 607 (QLSSPLSSPL…SSPPSPLSYK (65 aa)). The N-linked (GlcNAc...) asparagine glycan is linked to asparagine 652. Residues 659–678 (IKKSKSKYNNDKKEQKKLPL) are disordered. Residues 666–675 (YNNDKKEQKK) show a composition bias toward basic and acidic residues. Asparagine 681, asparagine 712, asparagine 737, asparagine 811, and asparagine 819 each carry an N-linked (GlcNAc...) asparagine glycan. Residues 836–844 (QNINNFGKY) and lysine 864 contribute to the ATP site. Residues asparagine 1024, asparagine 1031, asparagine 1074, and asparagine 1157 are each glycosylated (N-linked (GlcNAc...) asparagine). The Protein kinase domain occupies 1088-1483 (FHYQHNVLCG…HILKTISTLY (396 aa)). The short motif at 1238-1241 (KVLF) is the RVxF motif 2 element. An N-linked (GlcNAc...) asparagine glycan is attached at asparagine 1382.

Belongs to the protein kinase superfamily. TKL Ser/Thr protein kinase family. As to quaternary structure, interacts (via RVxF motif 1 and/or 2) with phosphatase PP1C. May interact (via SAM domain) with SERA5 (via C-terminus).

The protein localises to the parasitophorous vacuole. It localises to the host cell membrane. The protein resides in the host cytoplasm. Its subcellular location is the host cytoskeleton. This chain is Inactive protein tyrosine kinase pTKL, found in Plasmodium falciparum (isolate 3D7).